The following is a 298-amino-acid chain: GTP-binding protein REM 1 (298 aa).

The interval 1–73 is disordered; the sequence is MTLNTEQEAK…DDWSSESSDS (73 aa). Residues 35–55 are compositionally biased toward polar residues; the sequence is TVPSTQSQHPRLGQSASLNPP. Ser51 is subject to Phosphoserine. Low complexity predominate over residues 63–73; that stretch reads PDDWSSESSDS. GTP contacts are provided by residues 87–94 and 195–198; these read GDPGVGKT and NKAD. Positions 268–287 are calmodulin-binding; it reads ARRFLARLTARSARRRALKA.

It belongs to the small GTPase superfamily. RGK family. In terms of assembly, in vitro, interacts with calmodulin in a calcium-dependent manner. In terms of tissue distribution, most highly expressed in the endothelial lining of the blood vessels in uterus and heart. Lower levels found in spleen, lymph node, kidney and testis. Also found in cells with secretory function such as the islets of Langerhans, lobule/duct epithelium in the breast, bile duct epithelium in the liver, surface epithelium in the endometrial glands of the uterus, colon mucosa and acinar cells in the pancreas and the prostate.

Its function is as follows. Promotes endothelial cell sprouting and actin cytoskeletal reorganization. May be involved in angiogenesis. May function in Ca(2+) signaling. The sequence is that of GTP-binding protein REM 1 (REM1) from Homo sapiens (Human).